The primary structure comprises 629 residues: MSSTENNGTAVPLQEFEYKAEMKQLLDLIIHSLYTHPEIYLRELISNASDALSKARFNALTDQDMLDKDAELAIRLTLNAEEKSVVIEDSGIGMTEEELIANLGTVAKSGTLGFMQSLKEQQQQLDGNLIGQFGVGFYSVFMVTEEVTVETRSFHSNAQGYRWRSSGQGTYTIEQIDKATRGTRISFKLKEEHQEFAEEYRVEQIIKKYSNFVDFPIYLGERQLNSMTALWQRPKSELKDEEVNEFYKFVASDFNDPLDYLSISVEGMVSFKALLFLPKEAPPELMYRQSELENRGPQLYVKKVLIQNECRDLLPEYLRFIAGVVDTEDLSLNVSREMVQSSPVMAKIRQILTGKILGWFEMLAKEQPEKFKTFYKAFGPIIKIGLNTDFTNREKLIELLRFESTKTEEGEFVTLREYVERMGSEQKEIYYHSGNNRAQLLAHPNIEYFREHGIEVLLLSDPVDMFVIPSIHEFDKKPLKSIEKADCDFSQQSSNKAEPVAPNLLNPVLQAFKEALSNEVEDVVESRRLVSSPVTLVSGKDAIDSQLERMMKMMNTPMPPAKRILEVNSSHPIVRNIAGMIMADANNPLIKTVARQLYEGALFLEGSLEDATSYVTRMNELIEAATLTR.

An a; substrate-binding region spans residues Met1–Arg336. Residues Glu337–Arg549 are b. Residues Met550 to Arg629 are c.

This sequence belongs to the heat shock protein 90 family. Homodimer.

It is found in the cytoplasm. Molecular chaperone. Has ATPase activity. This chain is Chaperone protein HtpG, found in Chlorobium chlorochromatii (strain CaD3).